We begin with the raw amino-acid sequence, 100 residues long: Urease subunit gamma (100 aa).

This sequence belongs to the urease gamma subunit family. Heterotrimer of UreA (gamma), UreB (beta) and UreC (alpha) subunits. Three heterotrimers associate to form the active enzyme.

It localises to the cytoplasm. The enzyme catalyses urea + 2 H2O + H(+) = hydrogencarbonate + 2 NH4(+). Its pathway is nitrogen metabolism; urea degradation; CO(2) and NH(3) from urea (urease route): step 1/1. The protein is Urease subunit gamma of Prochlorococcus marinus subsp. pastoris (strain CCMP1986 / NIES-2087 / MED4).